The primary structure comprises 907 residues: Alanine--tRNA ligase (907 aa).

Residues His-581, His-585, Cys-683, and His-687 each coordinate Zn(2+).

The protein belongs to the class-II aminoacyl-tRNA synthetase family. Zn(2+) serves as cofactor.

The protein localises to the cytoplasm. The enzyme catalyses tRNA(Ala) + L-alanine + ATP = L-alanyl-tRNA(Ala) + AMP + diphosphate. Catalyzes the attachment of alanine to tRNA(Ala) in a two-step reaction: alanine is first activated by ATP to form Ala-AMP and then transferred to the acceptor end of tRNA(Ala). Also edits incorrectly charged Ser-tRNA(Ala) and Gly-tRNA(Ala) via its editing domain. The sequence is that of Alanine--tRNA ligase from Bdellovibrio bacteriovorus (strain ATCC 15356 / DSM 50701 / NCIMB 9529 / HD100).